The sequence spans 131 residues: Probable flagellum biosynthesis repressor protein FlbT (131 aa).

This sequence belongs to the FlbT family.

Has a post-transcriptional repressor function in flagellum biogenesis. Associates with the 5'-UTR of fljK mRNA and promotes its degradation. The polypeptide is Probable flagellum biosynthesis repressor protein FlbT (Caulobacter sp. (strain K31)).